Consider the following 710-residue polypeptide: Solute carrier organic anion transporter family member 3A1 (710 aa).

M1 carries the N-acetylmethionine modification. The segment covering 1 to 15 (MQGKKPGGSSGGGRS) has biased composition (gly residues). Positions 1 to 25 (MQGKKPGGSSGGGRSGELQGDEAQR) are disordered. The Cytoplasmic portion of the chain corresponds to 1-40 (MQGKKPGGSSGGGRSGELQGDEAQRNKKKKKKVSCFSNIK). A helical membrane pass occupies residues 41–60 (IFLVSECALMLAQGTVGAYL). Residues 61-79 (VSVLTTLERRFNLQSADVG) lie on the Extracellular side of the membrane. A helical transmembrane segment spans residues 80-100 (VIASSFEIGNLALILFVSYFG). At 101-106 (ARGHRP) the chain is on the cytoplasmic side. A helical membrane pass occupies residues 107–131 (RLIGCGGIVMALGALLSALPEFLTH). Topologically, residues 132–174 (QYKYEAGEIRWGAEGRDVCATNGSSSDEGPDPDLICRNRTATN) are extracellular. N-linked (GlcNAc...) asparagine glycosylation is found at N153 and N169. Residues 175–203 (MMYLLLIGAQVLLGIGATPVQPLGVSYID) form a helical membrane-spanning segment. The Cytoplasmic portion of the chain corresponds to 204–222 (DHVRRKDSSLYIGILFTML). A helical transmembrane segment spans residues 223 to 243 (VFGPACGFILGSFCTKIYVDA). Residues 244–261 (VFIDTSNLDITPDDPRWI) are Extracellular-facing. A helical membrane pass occupies residues 262-286 (GAWWGGFLLCGALLFFSSLLMFGFP). The Cytoplasmic portion of the chain corresponds to 287 to 344 (QSLPPHSEPGMESEQAMLPEREYERPKPSNGVLRHPLEPDSSASCFQQLRVIPKVTKH). The chain crosses the membrane as a helical span at residues 345–366 (LLSNPVFTCIVLAACMEIAVVA). Topologically, residues 367 to 386 (GFAAFLGKYLEQQFNLTTSS) are extracellular. The N-linked (GlcNAc...) asparagine glycan is linked to N381. The helical transmembrane segment at 387 to 410 (ANQLLGMTAIPCACLGIFLGGLLV) threads the bilayer. Residues 411–414 (KKLS) are Cytoplasmic-facing. A helical membrane pass occupies residues 415–438 (LSALGAIRMAMLVNLVSTACYVSF). Over 439–539 (LFLGCDTVPV…PGCQEAFLTF (101 aa)) the chain is Extracellular. N457 carries an N-linked (GlcNAc...) asparagine glycan. The Kazal-like domain maps to 465 to 513 (LDPYSPCNNNCECQTDSFTPVCGADGITYLSACFAGCNSTNLTGCACLT). Disulfide bonds link C471-C501, C477-C497, and C486-C511. N-linked (GlcNAc...) asparagine glycosylation is found at N502, N505, and N519. The helical transmembrane segment at 540 to 562 (LCVMCVCSLIGAMAQTPSVIILI) threads the bilayer. Residues 563–571 (RTVSPELKS) are Cytoplasmic-facing. A helical membrane pass occupies residues 572–597 (YALGVLFLLLRLLGFIPPPLIFGAGI). The Extracellular segment spans residues 598–630 (DSTCLFWSTFCGEQGACVLYDNVVYRYLYVSIA). A helical transmembrane segment spans residues 631–648 (IALKSFAFILYTTTWQCL). Residues 649 to 705 (RKNYKRYIKNHEGGLSTSEFLASTLTLDNLGRDPVPAHQTHRTKFIYNLEDHEWCEN) are Cytoplasmic-facing.

This sequence belongs to the organo anion transporter (TC 2.A.60) family. In terms of tissue distribution, expressed in many brain regions, including frontal cortex, brain stem and cerebellum. Associated with neuronal bodies in a punctated matter. Detected at the arcuate nucleus and the choroid plexus (at protein level). Little expression, if any, in oligodendrocytes. In the cardiovascular system, detected in cardiac muscle cells and endothelial cells of aorta, coronary artery and left ventricular endocardium (at protein level). In the respiratory system, detected in alveolar epithelial cells and in mucosal epithelium of the trachea (at protein level). In the reproductive system, detected in spermatozoa, oocytes, smooth muscle cells of the ovary, epithelium of the glandula uterine, smooth muscle cells of the myometrium and epithelium of the endometrium (at protein level). In the kidney, detected in afferent and efferent arterioles, and the epithelium of distal tubules and collecting tubules (at protein level).

It localises to the basolateral cell membrane. The protein resides in the apical cell membrane. Its subcellular location is the basal cell membrane. The catalysed reaction is L-thyroxine(out) = L-thyroxine(in). The enzyme catalyses prostaglandin E1(out) = prostaglandin E1(in). It carries out the reaction prostaglandin E2(out) = prostaglandin E2(in). It catalyses the reaction prostaglandin F2alpha(out) = prostaglandin F2alpha(in). The catalysed reaction is (5Z,8Z,11Z,14Z)-eicosatetraenoate(out) = (5Z,8Z,11Z,14Z)-eicosatetraenoate(in). The enzyme catalyses taurocholate(out) = taurocholate(in). It carries out the reaction glycocholate(out) = glycocholate(in). It catalyses the reaction estrone 3-sulfate(out) = estrone 3-sulfate(in). The catalysed reaction is argipressin(out) = argipressin(in). In terms of biological role, putative organic anion antiporter with apparent broad substrate specificity. Recognizes various substrates including thyroid hormone L-thyroxine, prostanoids such as prostaglandin E1 and E2, bile acids such as taurocholate, glycolate and glycochenodeoxycholate and peptide hormones such as L-arginine vasopressin, likely operating in a tissue-specific manner. The transport mechanism, its electrogenicity and potential tissue-specific counterions remain to be elucidated. This is Solute carrier organic anion transporter family member 3A1 (Slco3a1) from Rattus norvegicus (Rat).